The chain runs to 216 residues: Cytochrome c oxidase subunit 2 (216 aa).

Over 1–8 the chain is Mitochondrial intermembrane; the sequence is LGLQNATS. A helical membrane pass occupies residues 9-39; sequence PIMEELIAFHDHALMIIFLISSLVLYIISLM. Topologically, residues 40-53 are mitochondrial matrix; that stretch reads LTTKLTHTSTMNAQ. A helical membrane pass occupies residues 54 to 81; that stretch reads EIEMIWTILPAVILIMIALPSLRILYMT. Topologically, residues 82–216 are mitochondrial intermembrane; the sequence is DEFNKPYLTL…FIYFQDFEVW (135 aa). Cu cation is bound by residues His-155, Cys-190, Glu-192, Cys-194, His-198, and Met-201. Residue Glu-192 coordinates Mg(2+).

The protein belongs to the cytochrome c oxidase subunit 2 family. As to quaternary structure, component of the cytochrome c oxidase (complex IV, CIV), a multisubunit enzyme composed of 14 subunits. The complex is composed of a catalytic core of 3 subunits MT-CO1, MT-CO2 and MT-CO3, encoded in the mitochondrial DNA, and 11 supernumerary subunits COX4I, COX5A, COX5B, COX6A, COX6B, COX6C, COX7A, COX7B, COX7C, COX8 and NDUFA4, which are encoded in the nuclear genome. The complex exists as a monomer or a dimer and forms supercomplexes (SCs) in the inner mitochondrial membrane with NADH-ubiquinone oxidoreductase (complex I, CI) and ubiquinol-cytochrome c oxidoreductase (cytochrome b-c1 complex, complex III, CIII), resulting in different assemblies (supercomplex SCI(1)III(2)IV(1) and megacomplex MCI(2)III(2)IV(2)). Found in a complex with TMEM177, COA6, COX18, COX20, SCO1 and SCO2. Interacts with TMEM177 in a COX20-dependent manner. Interacts with COX20. Interacts with COX16. Requires Cu cation as cofactor.

It localises to the mitochondrion inner membrane. The enzyme catalyses 4 Fe(II)-[cytochrome c] + O2 + 8 H(+)(in) = 4 Fe(III)-[cytochrome c] + 2 H2O + 4 H(+)(out). Functionally, component of the cytochrome c oxidase, the last enzyme in the mitochondrial electron transport chain which drives oxidative phosphorylation. The respiratory chain contains 3 multisubunit complexes succinate dehydrogenase (complex II, CII), ubiquinol-cytochrome c oxidoreductase (cytochrome b-c1 complex, complex III, CIII) and cytochrome c oxidase (complex IV, CIV), that cooperate to transfer electrons derived from NADH and succinate to molecular oxygen, creating an electrochemical gradient over the inner membrane that drives transmembrane transport and the ATP synthase. Cytochrome c oxidase is the component of the respiratory chain that catalyzes the reduction of oxygen to water. Electrons originating from reduced cytochrome c in the intermembrane space (IMS) are transferred via the dinuclear copper A center (CU(A)) of subunit 2 and heme A of subunit 1 to the active site in subunit 1, a binuclear center (BNC) formed by heme A3 and copper B (CU(B)). The BNC reduces molecular oxygen to 2 water molecules using 4 electrons from cytochrome c in the IMS and 4 protons from the mitochondrial matrix. This Callimico goeldii (Goeldi's marmoset) protein is Cytochrome c oxidase subunit 2 (MT-CO2).